Here is a 189-residue protein sequence, read N- to C-terminus: T cell receptor gamma constant 2 (189 aa).

An Ig-like domain is found at 10 to 104 (PKPTIFLPSI…NKNGIDQEII (95 aa)). Cys32 and Cys88 are oxidised to a cystine. Asn66, Asn120, Asn136, Asn142, and Asn151 each carry an N-linked (GlcNAc...) asparagine glycan. The helical transmembrane segment at 155-177 (YYTYLLLLLKSVVYFAIITCCLL) threads the bilayer.

In terms of assembly, gamma-delta TR is a heterodimer composed of a gamma and delta chain; disulfide-linked. The gamma-delta TR is associated with the transmembrane signaling CD3 coreceptor proteins following the stoichiometry: a single gamma-delta TR heterodimer associates with one CD3D-CD3E heterodimer, one CD3G-CD3E heterodimer and one CD247 homodimer forming a stable octameric structure. Upon activation, gamma-delta TR complex associates with FCER1G to initiate intracellular signaling.

It is found in the cell membrane. Constant region of T cell receptor (TR) gamma chain that participates in the antigen recognition. Gamma-delta TRs recognize a variety of self and foreign non-peptide antigens frequently expressed at the epithelial boundaries between the host and external environment, including endogenous lipids presented by MH-like protein CD1D and phosphoantigens presented by butyrophilin-like molecule BTN3A1. Upon antigen recognition induces rapid, innate-like immune responses involved in pathogen clearance and tissue repair. Binding of gamma-delta TR complex to antigen triggers phosphorylation of immunoreceptor tyrosine-based activation motifs (ITAMs) in the CD3 chains by the LCK and FYN kinases, allowing the recruitment, phosphorylation, and activation of ZAP70 that facilitates phosphorylation of the scaffolding proteins LCP2 and LAT. This lead to the formation of a supramolecular signalosome that recruits the phospholipase PLCG1, resulting in calcium mobilization and ERK activation, ultimately leading to T cell expansion and differentiation into effector cells. Gamma-delta TRs are produced through somatic rearrangement of a limited repertoire of variable (V), diversity (D), and joining (J) genes. The potential diversity of gamma-delta TRs is conferred by the unique ability to rearrange (D) genes in tandem and to utilize all three reading frames. The combinatorial diversity is considerably increased by the sequence exonuclease trimming and random nucleotide (N) region additions which occur during the V-(D)-J rearrangements. This Homo sapiens (Human) protein is T cell receptor gamma constant 2.